A 569-amino-acid chain; its full sequence is Glucose-6-phosphate isomerase, cytosolic 2A (569 aa).

The active-site Proton donor is the E360. Active-site residues include H391 and K516.

It belongs to the GPI family. Homodimer.

It localises to the cytoplasm. It carries out the reaction alpha-D-glucose 6-phosphate = beta-D-fructose 6-phosphate. The protein operates within carbohydrate degradation; glycolysis; D-glyceraldehyde 3-phosphate and glycerone phosphate from D-glucose: step 2/4. The sequence is that of Glucose-6-phosphate isomerase, cytosolic 2A (PGIC2-A) from Clarkia lewisii (Farewell-to-spring).